Here is a 290-residue protein sequence, read N- to C-terminus: Tegument protein VP22 (290 aa).

Over residues 98–112 the composition is skewed to polar residues; that stretch reads STSHGRLSPTKTTPH. The disordered stretch occupies residues 98–156; the sequence is STSHGRLSPTKTTPHPKSAGVTPPQRVPARPATRAAAPSATPTQPDCVAKQRTSPGVNS. Positions 118–142 are enriched in low complexity; it reads VTPPQRVPARPATRAAAPSATPTQP. The Nuclear localization signal signature appears at 146 to 149; sequence AKQR. A Nuclear export signal motif is present at residues 219-231; the sequence is LDRFLKAAAIRIL.

The protein belongs to the alphaherpesvirinae VP22 tegument protein family. Interacts with gE (via C-terminus); this interaction is necessary for the recruitment of VP22 to the Golgi and its packaging into virions. Interacts with gM (via C-terminus). Interacts with VP16; this interaction allows the formation of a tripartite complex composed of VP16, VP22 and UL41/VHS. Interacts with the capsid-binding protein UL16. Interacts with host CGAS. Highly phosphorylated in the host cell. Packaging is selective for underphosphorylated forms.

The protein resides in the virion tegument. The protein localises to the host cytoplasm. It is found in the host nucleus. Its subcellular location is the host Golgi apparatus. In terms of biological role, tegument protein that plays different roles during the time course of infection. Participates in both the accumulation of viral mRNAs and viral protein translation at late time of infection. Modulates the RNase activity of the virion host shutoff protein UL41 probably to ensure necessary levels of key cellular mRNAs and proteins. Plays a role in microtubule reorganization that occurs after viral infection by stabilizing microtubule network. Plays a role in the inhibition of host innate immune system by targeting the CGAS enzymatic activity which is the principal cytosolic DNA sensor that detects invading viral DNA. Acts by mediating disruption of liquid-like droplets in which CGAS is activated, thereby preventing CGAS activity. The chain is Tegument protein VP22 (11) from Equus caballus (Horse).